The chain runs to 385 residues: UPF0284 protein P9301_04631 (385 aa).

It belongs to the UPF0284 family.

This Prochlorococcus marinus (strain MIT 9301) protein is UPF0284 protein P9301_04631.